The sequence spans 468 residues: Aldehyde dehydrogenase family 3 member B1 (468 aa).

Met-1 bears the N-acetylmethionine mark. An NAD(+)-binding site is contributed by 188 to 193 (GSPRVG). Active-site residues include Glu-210 and Cys-244. Cys-463 carries the S-palmitoyl cysteine lipid modification. Residue Cys-465 is modified to Cysteine methyl ester. A lipid anchor (S-geranylgeranyl cysteine) is attached at Cys-465. Residues 466–468 (TLL) constitute a propeptide, removed in mature form.

Belongs to the aldehyde dehydrogenase family. Dually lipidated in the C-terminus; prenylation occurs prior to, and is a prerequisite for palmitoylation. It is also required for activity towards long-chain substrates. As to expression, highest expression in kidney and lung.

It localises to the cell membrane. It carries out the reaction an aldehyde + NADP(+) + H2O = a carboxylate + NADPH + 2 H(+). The catalysed reaction is an aldehyde + NAD(+) + H2O = a carboxylate + NADH + 2 H(+). The enzyme catalyses a long-chain fatty aldehyde + NAD(+) + H2O = a long-chain fatty acid + NADH + 2 H(+). It catalyses the reaction a medium-chain fatty aldehyde + NAD(+) + H2O = a medium-chain fatty acid + NADH + 2 H(+). It carries out the reaction octanal + NAD(+) + H2O = octanoate + NADH + 2 H(+). The catalysed reaction is nonanal + NAD(+) + H2O = nonanoate + NADH + 2 H(+). The enzyme catalyses hexadecanoate + NADH + 2 H(+) = hexadecanal + NAD(+) + H2O. It catalyses the reaction (2E)-octenal + NAD(+) + H2O = (2E)-octenoate + NADH + 2 H(+). It carries out the reaction (E)-non-2-enal + NAD(+) + H2O = (E)-non-2-enoate + NADH + 2 H(+). The catalysed reaction is (E)-4-hydroxynon-2-enal + NAD(+) + H2O = (E)-4-hydroxynon-2-enoate + NADH + 2 H(+). The enzyme catalyses (2E)-hexadecenal + NAD(+) + H2O = (E)-hexadec-2-enoate + NADH + 2 H(+). It catalyses the reaction benzaldehyde + NAD(+) + H2O = benzoate + NADH + 2 H(+). It carries out the reaction a medium-chain fatty aldehyde + NADP(+) + H2O = a medium-chain fatty acid + NADPH + 2 H(+). The catalysed reaction is hexanal + NADP(+) + H2O = hexanoate + NADPH + 2 H(+). The enzyme catalyses octanal + NADP(+) + H2O = octanoate + NADPH + 2 H(+). It catalyses the reaction nonanal + NADP(+) + H2O = nonanoate + NADPH + 2 H(+). It carries out the reaction (2E)-octenal + NADP(+) + H2O = (2E)-octenoate + NADPH + 2 H(+). The catalysed reaction is (E)-non-2-enal + NADP(+) + H2O = (E)-non-2-enoate + NADPH + 2 H(+). The enzyme catalyses (E)-4-hydroxynon-2-enal + NADP(+) + H2O = (E)-4-hydroxynon-2-enoate + NADPH + 2 H(+). It catalyses the reaction benzaldehyde + NADP(+) + H2O = benzoate + NADPH + 2 H(+). The protein operates within alcohol metabolism; ethanol degradation; acetate from ethanol: step 2/2. In terms of biological role, oxidizes medium and long chain saturated and unsaturated fatty aldehydes generated in the plasma membrane into non-toxic fatty acids. May have a protective role against the cytotoxicity induced by lipid peroxidation. Short-chain fatty aldehydes are not good substrates. Can use both NADP(+) and NAD(+) as electron acceptor in vitro, however in vivo preference will depend on their tissue levels. Low activity towards acetaldehyde and 3,4-dihydroxyphenylacetaldehyde. Able to metabolize aromatic aldehydes such as benzaldehyde to their acid form. In Homo sapiens (Human), this protein is Aldehyde dehydrogenase family 3 member B1 (ALDH3B1).